Consider the following 209-residue polypeptide: Uracil phosphoribosyltransferase (209 aa).

5-phospho-alpha-D-ribose 1-diphosphate-binding positions include arginine 79, arginine 104, and 131–139 (DPMLATGGS). Uracil contacts are provided by residues isoleucine 194 and 199 to 201 (GDA). Aspartate 200 provides a ligand contact to 5-phospho-alpha-D-ribose 1-diphosphate.

Belongs to the UPRTase family. Mg(2+) serves as cofactor.

It catalyses the reaction UMP + diphosphate = 5-phospho-alpha-D-ribose 1-diphosphate + uracil. It participates in pyrimidine metabolism; UMP biosynthesis via salvage pathway; UMP from uracil: step 1/1. Its activity is regulated as follows. Allosterically activated by GTP. Catalyzes the conversion of uracil and 5-phospho-alpha-D-ribose 1-diphosphate (PRPP) to UMP and diphosphate. This chain is Uracil phosphoribosyltransferase, found in Ligilactobacillus salivarius (strain UCC118) (Lactobacillus salivarius).